Here is a 610-residue protein sequence, read N- to C-terminus: DNA mismatch repair protein MutL (610 aa).

A disordered region spans residues 351–406 (GQRPQAPWSAETSPSRPYQPAPAFSERPQASFDGLSTPTARAEPQFSPDPVSPGLA).

Belongs to the DNA mismatch repair MutL/HexB family.

Functionally, this protein is involved in the repair of mismatches in DNA. It is required for dam-dependent methyl-directed DNA mismatch repair. May act as a 'molecular matchmaker', a protein that promotes the formation of a stable complex between two or more DNA-binding proteins in an ATP-dependent manner without itself being part of a final effector complex. The polypeptide is DNA mismatch repair protein MutL (Rhizobium etli (strain ATCC 51251 / DSM 11541 / JCM 21823 / NBRC 15573 / CFN 42)).